A 169-amino-acid polypeptide reads, in one-letter code: Allophycocyanin subunit beta-18 (169 aa).

Position 72 is an N4-methylasparagine (Asn-72). A (2R,3E)-phycocyanobilin-binding site is contributed by Cys-82.

This sequence belongs to the phycobiliprotein family. In terms of assembly, heterodimer of ApcE and this beta chain. Contains one covalently linked bilin chromophore. The chromophore is added by phycocyanobilin lyase CpcS 1.

The protein localises to the cellular thylakoid membrane. A variant beta-allophycocyanin (AP) which forms a complex with ApcE, a phycobilisome terminal emitter that influences energy transfer to photosystem II. In Nostoc sp. (strain PCC 7120 / SAG 25.82 / UTEX 2576), this protein is Allophycocyanin subunit beta-18 (apcF).